Reading from the N-terminus, the 642-residue chain is Polyglycine hydrolase (642 aa).

An N-terminal signal peptide occupies residues 1-23; sequence MYTSRLLLSNLASCLSLATLVAS. N-linked (GlcNAc...) asparagine glycosylation is found at N37, N100, N159, and N341. The cysteines at positions 149 and 183 are disulfide-linked. Residue S370 is part of the active site. N-linked (GlcNAc...) asparagine glycans are attached at residues N390, N407, N444, N487, and N494.

This sequence belongs to the peptidase S12 family.

It localises to the secreted. It catalyses the reaction a glycyl-glycyl-[protein] + H2O = N-terminal glycyl-[protein] + [protein]-C-terminal glycine. Its activity is regulated as follows. Not inhibited by phenylmethylsulfonyl fluoride (PMSF; serine peptidase class S1 inhibitor), clavulanic acid (beta-lactamase inhibitor) or ampicillin (penicillin-binding protein (PBP) inhibitor). Serine-type endopeptidase that cleaves Gly-Gly bonds in the polyglycine linker of host plant class IV chitinases to disrupt their chitin-binding, and thereby plays a role in lowering the defense responses of the host to the fungus. Degrades Z.mays Endochitinase A (CHIA). Degrades Z.mays Endochitinase B (CHIB). Has no activity on Z.mays CHIA following CHIA cleavage by fungalysin. The chain is Polyglycine hydrolase from Epicoccum sorghinum (Endophyte fungus).